The primary structure comprises 341 residues: Protein-glutamate methylesterase/protein-glutamine glutaminase 1 (341 aa).

The Response regulatory domain maps to 2–119 (KVGIVNDSAL…SDAKLTAGPL (118 aa)). A 4-aspartylphosphate modification is found at D53. Residues 146–331 (TLAASRLVAI…LTAIAPRLVQ (186 aa)) enclose the CheB-type methylesterase domain. Active-site residues include S158, H185, and D278.

Belongs to the CheB family. In terms of processing, phosphorylated by CheA. Phosphorylation of the N-terminal regulatory domain activates the methylesterase activity.

The protein localises to the cytoplasm. It catalyses the reaction [protein]-L-glutamate 5-O-methyl ester + H2O = L-glutamyl-[protein] + methanol + H(+). The enzyme catalyses L-glutaminyl-[protein] + H2O = L-glutamyl-[protein] + NH4(+). Involved in chemotaxis. Part of a chemotaxis signal transduction system that modulates chemotaxis in response to various stimuli. Catalyzes the demethylation of specific methylglutamate residues introduced into the chemoreceptors (methyl-accepting chemotaxis proteins or MCP) by CheR. Also mediates the irreversible deamidation of specific glutamine residues to glutamic acid. This chain is Protein-glutamate methylesterase/protein-glutamine glutaminase 1, found in Cupriavidus pinatubonensis (strain JMP 134 / LMG 1197) (Cupriavidus necator (strain JMP 134)).